The following is a 632-amino-acid chain: Chaperone protein DnaK (632 aa).

Thr198 carries the post-translational modification Phosphothreonine; by autocatalysis. A disordered region spans residues 524–557; sequence RREAVDAKNHADSLVHSTEKALAEHGSKIEDSER.

The protein belongs to the heat shock protein 70 family.

In terms of biological role, acts as a chaperone. The protein is Chaperone protein DnaK of Nitrobacter hamburgensis (strain DSM 10229 / NCIMB 13809 / X14).